The following is a 452-amino-acid chain: THO complex subunit 5A (452 aa).

It belongs to the THOC5 family. Component of the THO complex, which is composed of THO1, THO2, THO3, THO5, THO6 and THO7.

Its subcellular location is the nucleus. Functionally, acts as a component of the THO subcomplex of the TREX complex which is thought to couple mRNA transcription, processing and nuclear export. This is THO complex subunit 5A (THO5A) from Arabidopsis thaliana (Mouse-ear cress).